The following is a 306-amino-acid chain: Ribonuclease Z (306 aa).

Zn(2+) is bound by residues His63, His65, Asp67, His68, His140, Asp211, and His269. The Proton acceptor role is filled by Asp67.

Belongs to the RNase Z family. In terms of assembly, homodimer. It depends on Zn(2+) as a cofactor.

It carries out the reaction Endonucleolytic cleavage of RNA, removing extra 3' nucleotides from tRNA precursor, generating 3' termini of tRNAs. A 3'-hydroxy group is left at the tRNA terminus and a 5'-phosphoryl group is left at the trailer molecule.. Functionally, zinc phosphodiesterase, which displays some tRNA 3'-processing endonuclease activity. Probably involved in tRNA maturation, by removing a 3'-trailer from precursor tRNA. This Listeria monocytogenes serotype 4b (strain CLIP80459) protein is Ribonuclease Z.